Consider the following 278-residue polypeptide: MEMLEEHRCFQGWQQRWRHDSSTLNCPMTFSIFLPPPRDHTPPPVLYWLSGLTCNDENFTTKAGAQRVAAELGIVLVMPDTSPRGEKVANGDGYDLGQSAGFYLNATQPPWATHYRMYDYLRDELPALVQSQFNVSDRCAISGHSMGGHGALIMALKNPGKYTSVSAFAPIVNPCSVPWGIKAFSRYLGEDKNAWLEWDRCALMYASNAQDAIPTLIDQGDNDQFLADQLQPAVLAEAARQKAWPMTLRIQPGYDHSYYFIASFIEDHLRFHAQYLLK.

Catalysis depends on charge relay system residues serine 145, aspartate 223, and histidine 256.

It belongs to the esterase D family.

It catalyses the reaction S-formylglutathione + H2O = formate + glutathione + H(+). In terms of biological role, serine hydrolase involved in the detoxification of formaldehyde. Hydrolyzes S-formylglutathione to glutathione and formate. The protein is S-formylglutathione hydrolase YeiG (yeiG) of Shigella dysenteriae serotype 1 (strain Sd197).